A 130-amino-acid chain; its full sequence is Methylglyoxal synthase (130 aa).

One can recognise an MGS-like domain in the interval 1 to 130; sequence MSTPRIALIA…DLARRLPVKA (130 aa). Residues His11, Lys15, 37–40, and 57–58 each bind substrate; these read TGTT and SG. The Proton donor/acceptor role is filled by Asp63. His90 contacts substrate.

Belongs to the methylglyoxal synthase family.

The catalysed reaction is dihydroxyacetone phosphate = methylglyoxal + phosphate. Catalyzes the formation of methylglyoxal from dihydroxyacetone phosphate. The sequence is that of Methylglyoxal synthase from Burkholderia thailandensis (strain ATCC 700388 / DSM 13276 / CCUG 48851 / CIP 106301 / E264).